The sequence spans 207 residues: Elongation factor 1-beta (207 aa).

Residue A2 is modified to N-acetylalanine. The interval 70 to 96 is disordered; that stretch reads FPGIPTSASKEEDDDVDLFGSDEEDEE. Residues 80-96 are compositionally biased toward acidic residues; that stretch reads EEDDDVDLFGSDEEDEE. S90 carries the post-translational modification Phosphoserine; by CK2.

The protein belongs to the EF-1-beta/EF-1-delta family. In terms of assembly, EF-1 is composed of 4 subunits: alpha, beta, delta, and gamma. In terms of processing, phosphorylation affects the GDP/GTP exchange rate.

In terms of biological role, EF-1-beta and EF-1-delta stimulate the exchange of GDP bound to EF-1-alpha to GTP. The polypeptide is Elongation factor 1-beta (Artemia salina (Brine shrimp)).